Reading from the N-terminus, the 175-residue chain is Gamma-crystallin B (175 aa).

2 consecutive Beta/gamma crystallin 'Greek key' domains span residues 2 to 40 (GKIT…RVES) and 41 to 83 (GCWM…CLIP). The segment at 84–88 (PHSGA) is connecting peptide. 2 Beta/gamma crystallin 'Greek key' domains span residues 89-129 (YRMK…NVLE) and 130-172 (GSWI…RRVM).

It belongs to the beta/gamma-crystallin family. In terms of assembly, monomer.

Crystallins are the dominant structural components of the vertebrate eye lens. This chain is Gamma-crystallin B (CRYGB), found in Homo sapiens (Human).